The primary structure comprises 1370 residues: Zinc finger MYM-type protein 3 (1370 aa).

Low complexity-rich tracts occupy residues 1–12 (MDPSDFPSPFDP) and 52–61 (PSSGALDLLD). Disordered regions lie at residues 1–72 (MDPS…DPGV) and 90–301 (PSPP…QRAG). Residues 230 to 253 (ASEKPPERKRSERVRRAEPPKPEV) are compositionally biased toward basic and acidic residues. Residues S263 and S267 each carry the phosphoserine modification. Over residues 263 to 279 (SDEDSDAMVDDPNDEDF) the composition is skewed to acidic residues. Residues K308, K320, and K328 each participate in a glycyl lysine isopeptide (Lys-Gly) (interchain with G-Cter in SUMO2) cross-link. 9 consecutive MYM-type zinc fingers follow at residues 332 to 366 (QLFC…TKDS), 378 to 422 (HEFC…LHEV), 429 to 464 (HRLC…KTGS), 477 to 511 (KRFC…FEML), 521 to 559 (SLFC…PCYY), 567 to 604 (YQFC…KPEV), 612 to 646 (FQFC…HEKL), 653 to 692 (KSFC…GVTE), and 699 to 733 (WDFC…LETI). S464 carries the phosphoserine modification. The segment covering 759 to 794 (NLDTQSGPESLLNSQSPESKPQTPSQTKVENSNTVR) has biased composition (polar residues). Residues 759–830 (NLDTQSGPES…PPPPATPRKN (72 aa)) form a disordered region. Residues K778 and K786 each participate in a glycyl lysine isopeptide (Lys-Gly) (interchain with G-Cter in SUMO2) cross-link. T795 bears the Phosphothreonine mark. K804 is covalently cross-linked (Glycyl lysine isopeptide (Lys-Gly) (interchain with G-Cter in SUMO2)). A compositionally biased stretch (pro residues) spans 815–826 (APTPPPPPPPAT). Residues T817 and T826 each carry the phosphothreonine modification. Residues K847, K861, K920, and K1275 each participate in a glycyl lysine isopeptide (Lys-Gly) (interchain with G-Cter in SUMO2) cross-link.

As to quaternary structure, may be a component of a BHC histone deacetylase complex that contains HDAC1, HDAC2, HMG20B/BRAF35, KDM1A, RCOR1/CoREST, PHF21A/BHC80, ZMYM2, ZNF217, ZMYM3, GSE1 and GTF2I. As to expression, most abundant in brain, moderate in muscle and heart, low in other tissues except placenta.

The protein localises to the nucleus. In terms of biological role, plays a role in the regulation of cell morphology and cytoskeletal organization. The chain is Zinc finger MYM-type protein 3 (ZMYM3) from Homo sapiens (Human).